A 133-amino-acid polypeptide reads, in one-letter code: Large ribosomal subunit protein uL16 (133 aa).

Belongs to the universal ribosomal protein uL16 family. Part of the 50S ribosomal subunit.

Its function is as follows. Binds 23S rRNA and is also seen to make contacts with the A and possibly P site tRNAs. The protein is Large ribosomal subunit protein uL16 of Blochmanniella floridana.